Consider the following 345-residue polypeptide: Transcription factor MYB106 (345 aa).

HTH myb-type domains are found at residues 9-61 (KAGL…TNYL) and 62-116 (RPDI…KKRL). DNA-binding regions (H-T-H motif) lie at residues 37–61 (WRSL…TNYL) and 89–112 (WSAI…NTHL).

Expressed in trichomes, stems, carpels, petals and stamens.

It localises to the nucleus. Its function is as follows. Functions as a repressor of epidermal cell outgrowth and negatively regulate trichome branch formation. Acts both as a positive and a negative regulator of cellular outgrowth. Promotes both trichome expansion and branch formation. Coordinately with WIN1/SHN1, participates in the regulation of cuticle biosynthesis and wax accumulation in reproductive organs and trichomes. Functions in cuticle nanoridge formation in petals and stamens, and in morphogenesis of petal conical cells and trichomes. May play a role in the regulation of cuticle formation in vegetative organs. This Arabidopsis thaliana (Mouse-ear cress) protein is Transcription factor MYB106.